Consider the following 547-residue polypeptide: Probable high-affinity hexose transporter ght8, mitochondrial (547 aa).

The transit peptide at 1-21 directs the protein to the mitochondrion; sequence MGKTLTIVMLVFVSMAGWMFG. At 22-86 the chain is on the mitochondrial intermembrane side; sequence ADTGSIGGIT…SPLMDRIGKR (65 aa). Residues 87–107 form a helical membrane-spanning segment; the sequence is VSIMFWTIVYLIGIILQVTAV. Residues 108 to 112 are Cytoplasmic-facing; it reads PSWVQ. A helical transmembrane segment spans residues 113-133; the sequence is IMVAKIWTGLAIGALSVLAPG. Over 134-144 the chain is Mitochondrial intermembrane; sequence FQSEVAPATLR. A helical transmembrane segment spans residues 145-165; the sequence is GTIVTTYQLAVTGGIFIAACI. The Cytoplasmic portion of the chain corresponds to 166-179; it reads NMGTHKLHKTAQWR. The chain crosses the membrane as a helical span at residues 180–200; the sequence is VSMGINLLWGIIMFIGISFLP. The Mitochondrial intermembrane portion of the chain corresponds to 201–304; sequence ESPRYLIAIG…TGMNSPYLSA (104 aa). A helical membrane pass occupies residues 305–325; that stretch reads LILDAVNFGCTFGGLFVLEFF. Residues 326–328 lie on the Cytoplasmic side of the membrane; the sequence is GRR. Residues 329–349 traverse the membrane as a helical segment; the sequence is MPLIIGGVWQSITFFIYAAVG. Residues 350–363 are Mitochondrial intermembrane-facing; it reads NRALTRKNGTSNHR. Residues 364–384 traverse the membrane as a helical segment; that stretch reads AGAVMIVFSCLFIFSFAQTWG. The Cytoplasmic portion of the chain corresponds to 385-404; the sequence is PAAYVIVGESYPIRYRSKCA. Residues 405–425 form a helical membrane-spanning segment; it reads AVATTGNWLWGFLITFFTPFI. The Mitochondrial intermembrane segment spans residues 426–432; the sequence is SDSIGFK. The chain crosses the membrane as a helical span at residues 433-453; sequence YGYIFAACNLCAACIIFLFAH. At 454–547 the chain is on the cytoplasmic side; it reads ETKGLTLEEI…NYVDEQDRYA (94 aa). The tract at residues 482 to 547 is disordered; that stretch reads GQAAKQQQEV…NYVDEQDRYA (66 aa). Positions 517–529 are enriched in low complexity; it reads TSSNDITSSTSSS. Residue S519 is modified to Phosphoserine. T523 and T526 each carry phosphothreonine. A phosphoserine mark is found at S527, S528, S529, and S537.

Belongs to the major facilitator superfamily. Sugar transporter (TC 2.A.1.1) family.

The protein localises to the mitochondrion membrane. The chain is Probable high-affinity hexose transporter ght8, mitochondrial (ght8) from Schizosaccharomyces pombe (strain 972 / ATCC 24843) (Fission yeast).